A 52-amino-acid chain; its full sequence is uncharacterized protein (52 aa).

The tract at residues 1–52 (MVNNDAKIGRREFYDRVESVRPKSPPRERPTYTYSNSRTVDGYSNRGPRADF) is disordered. A compositionally biased stretch (basic and acidic residues) spans 7 to 30 (KIGRREFYDRVESVRPKSPPRERP).

This is an uncharacterized protein from Dictyostelium discoideum (Social amoeba).